Here is a 602-residue protein sequence, read N- to C-terminus: Elongation factor 4 (602 aa).

A tr-type G domain is found at 7-189 (KYIRNFSIVA…AIVNKVPAPD (183 aa)). GTP-binding positions include 19-24 (DHGKST) and 136-139 (NKID).

This sequence belongs to the TRAFAC class translation factor GTPase superfamily. Classic translation factor GTPase family. LepA subfamily.

It is found in the cell membrane. The catalysed reaction is GTP + H2O = GDP + phosphate + H(+). In terms of biological role, required for accurate and efficient protein synthesis under certain stress conditions. May act as a fidelity factor of the translation reaction, by catalyzing a one-codon backward translocation of tRNAs on improperly translocated ribosomes. Back-translocation proceeds from a post-translocation (POST) complex to a pre-translocation (PRE) complex, thus giving elongation factor G a second chance to translocate the tRNAs correctly. Binds to ribosomes in a GTP-dependent manner. The protein is Elongation factor 4 of Clostridium botulinum (strain ATCC 19397 / Type A).